We begin with the raw amino-acid sequence, 505 residues long: AMP phosphorylase (505 aa).

AMP contacts are provided by residues Gly170, 196–201 (SRAITS), and Thr205. Asp258 serves as the catalytic Proton donor. Residues Ser266 and Lys290 each contribute to the AMP site.

Belongs to the thymidine/pyrimidine-nucleoside phosphorylase family. Type 2 subfamily.

The enzyme catalyses AMP + phosphate = alpha-D-ribose 1,5-bisphosphate + adenine. The catalysed reaction is CMP + phosphate = cytosine + alpha-D-ribose 1,5-bisphosphate. It catalyses the reaction UMP + phosphate = alpha-D-ribose 1,5-bisphosphate + uracil. Functionally, catalyzes the conversion of AMP and phosphate to adenine and ribose 1,5-bisphosphate (R15P). Exhibits phosphorylase activity toward CMP and UMP in addition to AMP. Functions in an archaeal AMP degradation pathway, together with R15P isomerase and RubisCO. The polypeptide is AMP phosphorylase (Methanococcus maripaludis (strain C5 / ATCC BAA-1333)).